We begin with the raw amino-acid sequence, 1435 residues long: Neuropathy target esterase sws (1435 aa).

At 1 to 35 (MDVLELLRVSGSNMYYSTFLADAWCYYISNQITMT) the chain is on the lumenal side. Residues 36–56 (MYLYCALGVLSMLFIGWFVYF) traverse the membrane as a helical segment. Residues 57 to 1435 (KRLARLRLRH…NTNNETKNYL (1379 aa)) are Cytoplasmic-facing. 176–303 (IFGHFEKPIF…IRVIQVIMIR (128 aa)) is an a nucleoside 3',5'-cyclic phosphate binding site. The segment covering 361–372 (AASGTAGSTHTA) has biased composition (low complexity). 2 disordered regions span residues 361 to 405 (AASG…ELSG) and 422 to 452 (NSYP…QPEV). Residues 435-449 (GNLSTRRGSITQQEQ) are compositionally biased toward polar residues. S443 carries the phosphoserine modification. Residues 474–601 (ELGL…VVRR) and 590–717 (IVLD…LSHR) each bind a nucleoside 3',5'-cyclic phosphate. One can recognise a PNPLA domain in the interval 944 to 1110 (LVLGGGGARG…VNNLPGHLWR (167 aa)). The short motif at 948-953 (GGGARG) is the GXGXXG element. A GXSXG motif is present at residues 975 to 979 (GVSIG). The active-site Nucleophile is S977. The active-site Proton acceptor is the D1097. Positions 1097–1099 (DGG) match the DGA/G motif. Residues 1308–1435 (MDKATQSTPP…NTNNETKNYL (128 aa)) form a disordered region. The segment covering 1311–1322 (ATQSTPPLQSKA) has biased composition (polar residues). Composition is skewed to basic and acidic residues over residues 1330 to 1361 (SKEE…RELS) and 1393 to 1424 (MDKK…KENR). The span at 1425–1435 (SNTNNETKNYL) shows a compositional bias: polar residues.

Belongs to the NTE family. As to quaternary structure, interacts with Pka-C3; interaction inhibits the catalytic function of Pka-C3 and the esterase activity of sws.

It is found in the endoplasmic reticulum membrane. It catalyses the reaction a 1-acyl-sn-glycero-3-phosphocholine + H2O = sn-glycerol 3-phosphocholine + a fatty acid + H(+). Phospholipase B that deacylates intracellular phosphatidylcholine (PtdCho), generating glycerophosphocholine (GroPtdCho). This deacylation occurs at both sn-2 and sn-1 positions of PtdCho. Its specific chemical modification by certain organophosphorus (OP) compounds leads to distal axonopathy. Plays a role in the signaling mechanism between neurons and glia that regulates glia wrapping during development of the adult brain. Essential for membrane lipid homeostasis and cell survival in both neurons and glia of the adult brain. This chain is Neuropathy target esterase sws, found in Drosophila persimilis (Fruit fly).